Here is a 144-residue protein sequence, read N- to C-terminus: Transmembrane protein 170A (144 aa).

The Lumenal portion of the chain corresponds to 1–50 (MEREGSGGSGGSAGLLQQILSLKVVPRVGNGTLCPNSTSLCSFPEMWYGV). Asparagine 30 and asparagine 36 each carry an N-linked (GlcNAc...) asparagine glycan. The helical transmembrane segment at 51–71 (FLWALVSSLFFHVPAGLLALF) threads the bilayer. Residues 72–85 (TLRHHKYGRFMSVS) lie on the Cytoplasmic side of the membrane. A helical membrane pass occupies residues 86–106 (ILLMGIVGPITAGILTSAAIA). Over 107–116 (GVYRAAGKEM) the chain is Lumenal. Residues 117 to 137 (IPFEALTLGTGQTFCVLVVSF) traverse the membrane as a helical segment. Over 138-144 (LRILATL) the chain is Cytoplasmic.

The protein belongs to the TMEM170 family. As to quaternary structure, interacts with RTN4.

Its subcellular location is the endoplasmic reticulum membrane. It localises to the nucleus envelope. Functionally, acts as a regulator of endoplasmic reticulum (ER) and nuclear envelope (NE) morphogenesis. Affects the ratio between tubular ER and ER sheets by promoting sheet formation at the expense of tubules. Influences NE expansion, nuclear pore complex formation and proper localization of inner nuclear membrane proteins. This chain is Transmembrane protein 170A (TMEM170A), found in Homo sapiens (Human).